A 502-amino-acid chain; its full sequence is Protein O-glucosyltransferase 2 (502 aa).

The N-terminal stretch at 1 to 19 (MFGTLLLYCFFLATVPALA) is a signal peptide. The stretch at 24-130 (ERQLSPEKSE…VAKSPYILKG (107 aa)) is one Filamin repeat. N-linked (GlcNAc...) asparagine glycans are attached at residues Asn302 and Asn414. The Prevents secretion from ER motif lies at 499–502 (KDEL).

It belongs to the KDELC family. Post-translationally, N-glycosylated.

It is found in the endoplasmic reticulum lumen. It catalyses the reaction L-seryl-[EGF-like domain protein] + UDP-alpha-D-glucose = 3-O-(beta-D-glucosyl)-L-seryl-[EGF-like domain protein] + UDP + H(+). The enzyme catalyses L-seryl-[EGF-like domain protein] + UDP-alpha-D-xylose = 3-O-(beta-D-xylosyl)-L-seryl-[EGF-like domain protein] + UDP + H(+). The protein operates within protein modification; protein glycosylation. Functionally, protein glucosyltransferase that catalyzes the transfer of glucose from UDP-glucose to a serine residue within the consensus sequence peptide C-X-N-T-X-G-S-F-X-C. Can also catalyze the transfer of xylose from UDP-xylose but less efficiently. Specifically targets extracellular EGF repeats of proteins such as NOTCH1, NOTCH3, FBN1, FBN2 and LTBP1. May regulate the transport of NOTCH1 and NOTCH3 to the plasma membrane and thereby the Notch signaling pathway. This chain is Protein O-glucosyltransferase 2, found in Homo sapiens (Human).